We begin with the raw amino-acid sequence, 724 residues long: 1,3-beta-galactosyl-N-acetylhexosamine phosphorylase Cphy3030 (724 aa).

The active-site Proton donor is D316.

It belongs to the glycoside hydrolase 112 family.

The enzyme catalyses beta-D-galactosyl-(1-&gt;3)-N-acetyl-D-glucosamine + phosphate = alpha-D-galactose 1-phosphate + N-acetyl-D-glucosamine. In terms of biological role, reversibly phosphorolyzes beta-D-galactopyranosyl-(1-&gt;3)-N-acetyl-D-glucosamine to form alpha-D-galactopyranose 1-phosphate and acetyl-D-glucosamine. Active towards galacto-N-biose and lacto-N-biose. Does not phosphorolyze galacto-N-tetraose or lacto-N-tetraose. In the reverse reaction has activity toward N-acetyl-D-glucosamine and N-acetyl-D-galactosamine, but not L-rhamnose, D-glucose or D-galactose. The chain is 1,3-beta-galactosyl-N-acetylhexosamine phosphorylase Cphy3030 from Lachnoclostridium phytofermentans (strain ATCC 700394 / DSM 18823 / ISDg) (Clostridium phytofermentans).